A 420-amino-acid polypeptide reads, in one-letter code: Glucose-1-phosphate adenylyltransferase (420 aa).

Alpha-D-glucose 1-phosphate-binding positions include Tyr-107, Gly-173, Glu-188–Lys-189, and Ser-206.

It belongs to the bacterial/plant glucose-1-phosphate adenylyltransferase family. In terms of assembly, homotetramer.

It carries out the reaction alpha-D-glucose 1-phosphate + ATP + H(+) = ADP-alpha-D-glucose + diphosphate. Its pathway is glycan biosynthesis; glycogen biosynthesis. Involved in the biosynthesis of ADP-glucose, a building block required for the elongation reactions to produce glycogen. Catalyzes the reaction between ATP and alpha-D-glucose 1-phosphate (G1P) to produce pyrophosphate and ADP-Glc. This Shewanella oneidensis (strain ATCC 700550 / JCM 31522 / CIP 106686 / LMG 19005 / NCIMB 14063 / MR-1) protein is Glucose-1-phosphate adenylyltransferase.